The sequence spans 999 residues: uncharacterized protein (999 aa).

The span at 45-128 shows a compositional bias: low complexity; it reads NSNNIGNGNG…TPTITPSSPS (84 aa). Positions 45 to 129 are disordered; the sequence is NSNNIGNGNG…PTITPSSPSV (85 aa). A coiled-coil region spans residues 723-767; it reads YQQSQQQQSQQQQQQQQQQQQQQQQQQQQQQQQQQQQQQQQQQQQ. Residues 873–887 are compositionally biased toward low complexity; sequence NDINNANNSNNNNNN. A disordered region spans residues 873 to 904; sequence NDINNANNSNNNNNNQSQVLLSPNRNKDGTLN. A helical transmembrane segment spans residues 976 to 996; that stretch reads LFSLVLILAFIWFFFEIYFFF.

It localises to the membrane. This is an uncharacterized protein from Dictyostelium discoideum (Social amoeba).